The primary structure comprises 517 residues: Acetylcholine receptor subunit gamma (517 aa).

The N-terminal stretch at 1–22 (MHGGQGPLLLLLLLAVCLGAQG) is a signal peptide. Over 23–240 (RNQEERLLAD…VVFYLLIQRK (218 aa)) the chain is Extracellular. Asn52 and Asn163 each carry an N-linked (GlcNAc...) asparagine glycan. Residues Cys150 and Cys164 are joined by a disulfide bond. A run of 3 helical transmembrane segments spans residues 241 to 265 (PLFYVINIIAPCVLISSVAILIHFL), 275 to 293 (TVAINVLLAQTVFLFLVAK), and 309 to 330 (LTFLLVVTILIVVNAVVVLNVS). Residues 331 to 474 (LRSPHTHSMA…WFLVGRVLDR (144 aa)) lie on the Cytoplasmic side of the membrane. Residues 475 to 495 (VCFLAMLSLFICGTAGIFLMA) form a helical membrane-spanning segment.

Belongs to the ligand-gated ion channel (TC 1.A.9) family. Acetylcholine receptor (TC 1.A.9.1) subfamily. Gamma/CHRNG sub-subfamily. As to quaternary structure, pentamer of two alpha chains, and one each of the beta, delta, and gamma (in immature muscle) or epsilon (in mature muscle) chains.

It is found in the postsynaptic cell membrane. It localises to the cell membrane. It carries out the reaction K(+)(in) = K(+)(out). The catalysed reaction is Na(+)(in) = Na(+)(out). After binding acetylcholine, the AChR responds by an extensive change in conformation that affects all subunits and leads to opening of an ion-conducting channel across the plasma membrane. The sequence is that of Acetylcholine receptor subunit gamma from Homo sapiens (Human).